The chain runs to 338 residues: Fructose-1,6-bisphosphatase class 1 (338 aa).

Positions 91, 113, 115, and 116 each coordinate Mg(2+). Substrate contacts are provided by residues 116–119 (DGSS), N208, and K274. E280 is a Mg(2+) binding site.

The protein belongs to the FBPase class 1 family. As to quaternary structure, homotetramer. Requires Mg(2+) as cofactor.

The protein localises to the cytoplasm. The catalysed reaction is beta-D-fructose 1,6-bisphosphate + H2O = beta-D-fructose 6-phosphate + phosphate. It functions in the pathway carbohydrate biosynthesis; gluconeogenesis. This chain is Fructose-1,6-bisphosphatase class 1, found in Ralstonia nicotianae (strain ATCC BAA-1114 / GMI1000) (Ralstonia solanacearum).